A 401-amino-acid polypeptide reads, in one-letter code: Probable tRNA sulfurtransferase (401 aa).

The THUMP domain occupies 60–165; it reads EPISEQLKGV…EQATYITFKD (106 aa). Residues 183–184, 208–209, Arg-265, Gly-287, and Gln-296 contribute to the ATP site; these read ML and HF.

This sequence belongs to the ThiI family.

It localises to the cytoplasm. The enzyme catalyses [ThiI sulfur-carrier protein]-S-sulfanyl-L-cysteine + a uridine in tRNA + 2 reduced [2Fe-2S]-[ferredoxin] + ATP + H(+) = [ThiI sulfur-carrier protein]-L-cysteine + a 4-thiouridine in tRNA + 2 oxidized [2Fe-2S]-[ferredoxin] + AMP + diphosphate. The catalysed reaction is [ThiS sulfur-carrier protein]-C-terminal Gly-Gly-AMP + S-sulfanyl-L-cysteinyl-[cysteine desulfurase] + AH2 = [ThiS sulfur-carrier protein]-C-terminal-Gly-aminoethanethioate + L-cysteinyl-[cysteine desulfurase] + A + AMP + 2 H(+). It participates in cofactor biosynthesis; thiamine diphosphate biosynthesis. Catalyzes the ATP-dependent transfer of a sulfur to tRNA to produce 4-thiouridine in position 8 of tRNAs, which functions as a near-UV photosensor. Also catalyzes the transfer of sulfur to the sulfur carrier protein ThiS, forming ThiS-thiocarboxylate. This is a step in the synthesis of thiazole, in the thiamine biosynthesis pathway. The sulfur is donated as persulfide by IscS. The polypeptide is Probable tRNA sulfurtransferase (Bacillus pumilus (strain SAFR-032)).